A 491-amino-acid chain; its full sequence is Ketol-acid reductoisomerase (NADP(+)) (491 aa).

The region spanning 15 to 208 (AQLGKCRFMG…GGHRAGVLES (194 aa)) is the KARI N-terminal Rossmann domain. NADP(+)-binding positions include 45 to 48 (CGAQ), Arg68, Arg76, Ser78, and 108 to 110 (DKQ). Residue His132 is part of the active site. Position 158 (Gly158) interacts with NADP(+). KARI C-terminal knotted domains are found at residues 209-344 (SFVA…TAPQ) and 345-484 (FEGK…MTDM). Asp217, Glu221, Glu389, and Glu393 together coordinate Mg(2+). Position 414 (Ser414) interacts with substrate.

It belongs to the ketol-acid reductoisomerase family. Mg(2+) serves as cofactor.

The catalysed reaction is (2R)-2,3-dihydroxy-3-methylbutanoate + NADP(+) = (2S)-2-acetolactate + NADPH + H(+). It carries out the reaction (2R,3R)-2,3-dihydroxy-3-methylpentanoate + NADP(+) = (S)-2-ethyl-2-hydroxy-3-oxobutanoate + NADPH + H(+). It participates in amino-acid biosynthesis; L-isoleucine biosynthesis; L-isoleucine from 2-oxobutanoate: step 2/4. Its pathway is amino-acid biosynthesis; L-valine biosynthesis; L-valine from pyruvate: step 2/4. Functionally, involved in the biosynthesis of branched-chain amino acids (BCAA). Catalyzes an alkyl-migration followed by a ketol-acid reduction of (S)-2-acetolactate (S2AL) to yield (R)-2,3-dihydroxy-isovalerate. In the isomerase reaction, S2AL is rearranged via a Mg-dependent methyl migration to produce 3-hydroxy-3-methyl-2-ketobutyrate (HMKB). In the reductase reaction, this 2-ketoacid undergoes a metal-dependent reduction by NADPH to yield (R)-2,3-dihydroxy-isovalerate. The polypeptide is Ketol-acid reductoisomerase (NADP(+)) (Salmonella dublin (strain CT_02021853)).